The primary structure comprises 319 residues: Acetyl esterase (319 aa).

The short motif at 91-93 is the Involved in the stabilization of the negatively charged intermediate by the formation of the oxyanion hole element; that stretch reads HGG. Active-site residues include Ser165, Asp262, and His292.

Belongs to the 'GDXG' lipolytic enzyme family. In terms of assembly, homodimer. Interacts with MalT and MelA.

It is found in the cytoplasm. Displays esterase activity towards short chain fatty esters (acyl chain length of up to 8 carbons). Able to hydrolyze triacetylglycerol (triacetin) and tributyrylglycerol (tributyrin), but not trioleylglycerol (triolein) or cholesterol oleate. Negatively regulates MalT activity by antagonizing maltotriose binding. Inhibits MelA galactosidase activity. The protein is Acetyl esterase of Escherichia coli O8 (strain IAI1).